A 457-amino-acid polypeptide reads, in one-letter code: Phosphoglucosamine mutase (457 aa).

Serine 103 serves as the catalytic Phosphoserine intermediate. Residues serine 103, aspartate 244, aspartate 246, and aspartate 248 each contribute to the Mg(2+) site. Serine 103 carries the post-translational modification Phosphoserine.

It belongs to the phosphohexose mutase family. Mg(2+) is required as a cofactor. Activated by phosphorylation.

The catalysed reaction is alpha-D-glucosamine 1-phosphate = D-glucosamine 6-phosphate. Its function is as follows. Catalyzes the conversion of glucosamine-6-phosphate to glucosamine-1-phosphate. This is Phosphoglucosamine mutase from Granulibacter bethesdensis (strain ATCC BAA-1260 / CGDNIH1).